Here is a 180-residue protein sequence, read N- to C-terminus: Lipid droplet coating protein Cap20 (180 aa).

This sequence belongs to the perilipin family. As to quaternary structure, interacts with class I hydrophobin Hydr1. Interacts also with the cAMP-dependent protein kinase catalytic subunit PkaC1.

It localises to the lipid droplet. Lipid droplet coating protein that regulates lipid metabolism, appressorial turgor pressure, and virulence. Mature appressoria with high turgor pressure are essential to penetrate the leaf surface. The chain is Lipid droplet coating protein Cap20 from Colletotrichum siamense (Anthracnose fungus).